Consider the following 156-residue polypeptide: Small ribosomal subunit protein uS7 (156 aa).

Belongs to the universal ribosomal protein uS7 family. Part of the 30S ribosomal subunit. Contacts proteins S9 and S11.

In terms of biological role, one of the primary rRNA binding proteins, it binds directly to 16S rRNA where it nucleates assembly of the head domain of the 30S subunit. Is located at the subunit interface close to the decoding center, probably blocks exit of the E-site tRNA. The polypeptide is Small ribosomal subunit protein uS7 (Neisseria gonorrhoeae (strain ATCC 700825 / FA 1090)).